The chain runs to 150 residues: MSEQQELQPAFSIEKIYVKDISLEVPNAPQVFLEQAQPEIDMQLASAGQQLDDGFFEVTLTVTVTAKLPEKTMFLCEVAQAGIFQIRNIPGEDLDPILGVACPNILFPYARETVSSVVNRAGFPPVLLAPINFEALYMQQRAQQAEAGNA.

This sequence belongs to the SecB family. In terms of assembly, homotetramer, a dimer of dimers. One homotetramer interacts with 1 SecA dimer.

Its subcellular location is the cytoplasm. Its function is as follows. One of the proteins required for the normal export of preproteins out of the cell cytoplasm. It is a molecular chaperone that binds to a subset of precursor proteins, maintaining them in a translocation-competent state. It also specifically binds to its receptor SecA. The polypeptide is Protein-export protein SecB (Chromobacterium violaceum (strain ATCC 12472 / DSM 30191 / JCM 1249 / CCUG 213 / NBRC 12614 / NCIMB 9131 / NCTC 9757 / MK)).